The sequence spans 352 residues: UDP-N-acetylglucosamine--N-acetylmuramyl-(pentapeptide) pyrophosphoryl-undecaprenol N-acetylglucosamine transferase (352 aa).

S195 and Q287 together coordinate UDP-N-acetyl-alpha-D-glucosamine.

This sequence belongs to the glycosyltransferase 28 family. MurG subfamily.

The protein resides in the cell membrane. The enzyme catalyses Mur2Ac(oyl-L-Ala-gamma-D-Glu-L-Lys-D-Ala-D-Ala)-di-trans,octa-cis-undecaprenyl diphosphate + UDP-N-acetyl-alpha-D-glucosamine = beta-D-GlcNAc-(1-&gt;4)-Mur2Ac(oyl-L-Ala-gamma-D-Glu-L-Lys-D-Ala-D-Ala)-di-trans,octa-cis-undecaprenyl diphosphate + UDP + H(+). It participates in cell wall biogenesis; peptidoglycan biosynthesis. Its function is as follows. Cell wall formation. Catalyzes the transfer of a GlcNAc subunit on undecaprenyl-pyrophosphoryl-MurNAc-pentapeptide (lipid intermediate I) to form undecaprenyl-pyrophosphoryl-MurNAc-(pentapeptide)GlcNAc (lipid intermediate II). The sequence is that of UDP-N-acetylglucosamine--N-acetylmuramyl-(pentapeptide) pyrophosphoryl-undecaprenol N-acetylglucosamine transferase from Streptococcus pneumoniae serotype 4 (strain ATCC BAA-334 / TIGR4).